Here is a 76-residue protein sequence, read N- to C-terminus: Small nuclear ribonucleoprotein G (76 aa).

The 73-residue stretch at 4-76 (AHPPELKKFM…IIMLEALERV (73 aa)) folds into the Sm domain.

This sequence belongs to the snRNP Sm proteins family. As to quaternary structure, core component of the spliceosomal U1, U2, U4 and U5 small nuclear ribonucleoproteins (snRNPs), the building blocks of the spliceosome. Most spliceosomal snRNPs contain a common set of Sm proteins, SNRPB, SNRPD1, SNRPD2, SNRPD3, SNRPE, SNRPF and SNRPG that assemble in a heptameric protein ring on the Sm site of the small nuclear RNA to form the core snRNP. Component of the U1 snRNP. The U1 snRNP is composed of the U1 snRNA and the 7 core Sm proteins SNRPB, SNRPD1, SNRPD2, SNRPD3, SNRPE, SNRPF and SNRPG, and at least three U1 snRNP-specific proteins SNRNP70/U1-70K, SNRPA/U1-A and SNRPC/U1-C. Component of the U4/U6-U5 tri-snRNP complex composed of the U4, U6 and U5 snRNAs and at least PRPF3, PRPF4, PRPF6, PRPF8, PRPF31, SNRNP200, TXNL4A, SNRNP40, SNRPB, SNRPD1, SNRPD2, SNRPD3, SNRPE, SNRPF, SNRPG, DDX23, CD2BP2, PPIH, SNU13, EFTUD2, SART1 and USP39, plus LSM2, LSM3, LSM4, LSM5, LSM6, LSM7 and LSM8. Component of the U7 snRNP complex, or U7 Sm protein core complex, that is composed of the U7 snRNA and at least LSM10, LSM11, SNRPB, SNRPD3, SNRPE, SNRPF and SNRPG; the complex does not contain SNRPD1 and SNRPD2. Component of the minor spliceosome, which splices U12-type introns. Part of the SMN-Sm complex that contains SMN1, GEMIN2/SIP1, DDX20/GEMIN3, GEMIN4, GEMIN5, GEMIN6, GEMIN7, GEMIN8, STRAP/UNRIP and the Sm proteins SNRPB, SNRPD1, SNRPD2, SNRPD3, SNRPE, SNRPF and SNRPG; catalyzes core snRNPs assembly. Forms a 6S pICln-Sm complex composed of CLNS1A/pICln, SNRPD1, SNRPD2, SNRPE, SNRPF and SNRPG; ring-like structure where CLNS1A/pICln mimics additional Sm proteins and which is unable to assemble into the core snRNP. Interacts with GEMIN2 (via N-terminus); the interaction is direct. Interacts with SNRPE; the interaction is direct.

The protein localises to the cytoplasm. It is found in the cytosol. The protein resides in the nucleus. In terms of biological role, plays a role in pre-mRNA splicing as a core component of the spliceosomal U1, U2, U4 and U5 small nuclear ribonucleoproteins (snRNPs), the building blocks of the spliceosome. Component of both the pre-catalytic spliceosome B complex and activated spliceosome C complexes. As a component of the minor spliceosome, involved in the splicing of U12-type introns in pre-mRNAs. As part of the U7 snRNP it is involved in histone 3'-end processing. This is Small nuclear ribonucleoprotein G (SNRPG) from Bos taurus (Bovine).